The following is a 490-amino-acid chain: MVPVIALVGRPNVGKSTLFNRLTRTRDAIVGDLSGLTRDRQYGEAKWQGRTYILIDTGGISGDEHGMDEKMAEQSLLAIEEADVVLFLVDAKAGFTAADQMIGEHLRKRNKTSYVIANKVDNIDPDMARAEFAPLGMGDAIPIAGAHGRGITQMLEIALSEFPKDDADEPEEGEEEIVAEGEEAKRIPGPSEKDGIKIAIIGRPNVGKSTLVNRMLGEDRVIVYDQPGTTRDSIYIPFERNDEKYTLIDTAGVRKRGKIHEEVEKFSVVKTLQAIKDANVVIFVMDAREGVVDHDLNLLGFALEAGRALVIALNKWDGMQPSERDYVKTELQRRLFFVDFADIHFISALHGTGVGNLYQSVQNSFKSAVTRWPTSRLTQILEDAVGEHAPPMVNNRRIKLRYAHLGGANPPLIVIHGNQVEKVPKSYVRYLENTYRRVLKLVGTPIRIEFKGGENPYEGNKNTLTDRQVNKKRRLMSHHKKADKKRRDKR.

An EngA-type G 1 domain is found at 3–166 (PVIALVGRPN…IALSEFPKDD (164 aa)). GTP is bound by residues 9 to 16 (GRPNVGKS), 56 to 60 (DTGGI), and 118 to 121 (NKVD). A disordered region spans residues 164-191 (KDDADEPEEGEEEIVAEGEEAKRIPGPS). A compositionally biased stretch (acidic residues) spans 166-181 (DADEPEEGEEEIVAEG). Basic and acidic residues predominate over residues 182-191 (EEAKRIPGPS). In terms of domain architecture, EngA-type G 2 spans 196 to 369 (IKIAIIGRPN…SVQNSFKSAV (174 aa)). GTP contacts are provided by residues 202-209 (GRPNVGKS), 249-253 (DTAGV), and 314-317 (NKWD). In terms of domain architecture, KH-like spans 370–454 (TRWPTSRLTQ…PIRIEFKGGE (85 aa)). The interval 452-490 (GGENPYEGNKNTLTDRQVNKKRRLMSHHKKADKKRRDKR) is disordered. Over residues 470-490 (NKKRRLMSHHKKADKKRRDKR) the composition is skewed to basic residues.

Belongs to the TRAFAC class TrmE-Era-EngA-EngB-Septin-like GTPase superfamily. EngA (Der) GTPase family. In terms of assembly, associates with the 50S ribosomal subunit.

In terms of biological role, GTPase that plays an essential role in the late steps of ribosome biogenesis. This Pseudomonas fluorescens (strain ATCC BAA-477 / NRRL B-23932 / Pf-5) protein is GTPase Der.